The chain runs to 284 residues: Trimeric intracellular cation channel type B-A (284 aa).

The Lumenal segment spans residues 1-15 (MESLSELSVQFSQLS). The helical transmembrane segment at 16 to 33 (MFPFFDMAHYVVSVMSAR) threads the bilayer. Residues 34 to 46 (EQAGALDIAARSP) lie on the Cytoplasmic side of the membrane. The helical transmembrane segment at 47 to 68 (MASWFSAMLYCFGGGILSSILL) threads the bilayer. The Lumenal segment spans residues 69–79 (AEPPIAVLSNT). Residues 80 to 99 (TNIMLASTIWYMVYYFPYDL) traverse the membrane as a helical segment. Over 100 to 102 (FYN) the chain is Cytoplasmic. The chain crosses the membrane as a helical span at residues 103 to 121 (CFFFLPIRLIIAGMKEVTR). Positions 117 and 121 each coordinate a 1,2-diacyl-sn-glycero-3-phospho-(1D-myo-inositol-4,5-bisphosphate). Topologically, residues 122-137 (TWKILSGVTHAHSHYK) are lumenal. The helical transmembrane segment at 138 to 155 (DALLVMITIGWARGAGGG) threads the bilayer. Residues 156–177 (LISNFEQLVRGVWKPESNEFLK) are Cytoplasmic-facing. A helical transmembrane segment spans residues 178-195 (MSYPVKVTLIGAVLFTLQ). Topologically, residues 196–206 (HGHYLPISRHN) are lumenal. A helical membrane pass occupies residues 207–224 (LMLIYTMFLVLIKVTMML). Over 225-284 (THSTASPFLPLETPLQRILFGQRQKPSEVRQSASSSGAKGKPSKKTLDKDSGEQSKKKDS) the chain is Cytoplasmic. The disordered stretch occupies residues 246–284 (QRQKPSEVRQSASSSGAKGKPSKKTLDKDSGEQSKKKDS). The segment covering 269–284 (KTLDKDSGEQSKKKDS) has biased composition (basic and acidic residues).

It belongs to the TMEM38 family. As to quaternary structure, homotrimer; conformation seems to be controled by binding to diacylglycerol (DAG).

Its subcellular location is the endoplasmic reticulum membrane. It carries out the reaction K(+)(in) = K(+)(out). With respect to regulation, channel activity is activated by increased cytosolic Ca(2+) levels and blocked by luminal high Ca(2+) levels. Intracellular monovalent cation channel required for maintenance of rapid intracellular calcium release. Acts as a potassium counter-ion channel that functions in synchronization with calcium release from intracellular stores. Activated by increased cytosolic Ca(2+) levels. The sequence is that of Trimeric intracellular cation channel type B-A (tmem38b-a) from Xenopus laevis (African clawed frog).